Here is a 189-residue protein sequence, read N- to C-terminus: uncharacterized protein (189 aa).

Helical transmembrane passes span 20–40 (FILG…YLTF), 46–66 (TIII…IILI), 100–120 (VLLF…SLNI), and 126–146 (FVLY…GDVI).

The protein to M.jannaschii MJ0795.1 and MJ1249.1.

Its subcellular location is the cell membrane. This is an uncharacterized protein from Methanocaldococcus jannaschii (strain ATCC 43067 / DSM 2661 / JAL-1 / JCM 10045 / NBRC 100440) (Methanococcus jannaschii).